The chain runs to 181 residues: Ferritin BfrB (181 aa).

Residues 5 to 150 (GALDTKFHAL…TLVRIADRAG (146 aa)) enclose the Ferritin-like diiron domain. Residue lysine 10 forms an Isoglutamyl lysine isopeptide (Lys-Gln) (interchain with Q-Cter in protein Pup) linkage. Fe cation is bound by residues glutamate 22, glutamate 55, histidine 58, glutamate 99, and glutamine 132.

It belongs to the ferritin family. Prokaryotic subfamily. As to quaternary structure, homooligomer of 24 subunits that are packed together to form an approximately spherical molecule with a central cavity, in which large amounts of iron can be stored.

It catalyses the reaction 4 Fe(2+) + O2 + 4 H(+) = 4 Fe(3+) + 2 H2O. In terms of biological role, iron-storage protein that displays ferroxidase activity, catalyzing the oxidation of Fe(2+) ions into Fe(3+) ions, that can then be deposited as a ferric-oxide mineral core within the central cavity of the protein complex. The protein is Ferritin BfrB (bfrB) of Mycolicibacterium smegmatis (strain ATCC 700084 / mc(2)155) (Mycobacterium smegmatis).